A 96-amino-acid chain; its full sequence is Large ribosomal subunit protein uL23 (96 aa).

This sequence belongs to the universal ribosomal protein uL23 family. As to quaternary structure, part of the 50S ribosomal subunit. Contacts protein L29, and trigger factor when it is bound to the ribosome.

One of the early assembly proteins it binds 23S rRNA. One of the proteins that surrounds the polypeptide exit tunnel on the outside of the ribosome. Forms the main docking site for trigger factor binding to the ribosome. In Maridesulfovibrio salexigens (strain ATCC 14822 / DSM 2638 / NCIMB 8403 / VKM B-1763) (Desulfovibrio salexigens), this protein is Large ribosomal subunit protein uL23.